Reading from the N-terminus, the 136-residue chain is Protein NrdI (136 aa).

It belongs to the NrdI family.

Functionally, probably involved in ribonucleotide reductase function. The chain is Protein NrdI from Klebsiella pneumoniae (strain 342).